The chain runs to 269 residues: Xyloglucan endotransglucosylase/hydrolase protein 24 (269 aa).

The first 21 residues, 1 to 21, serve as a signal peptide directing secretion; sequence MSPFKIFFFTTLLVAAFSVSA. A GH16 domain is found at 22-212; sequence ADFNTDVNVA…WSKAPFMASY (191 aa). Residue E98 is the Nucleophile of the active site. The active-site Proton donor is the E102. E102 is a xyloglucan binding site. N106 carries N-linked (GlcNAc...) asparagine glycosylation. Xyloglucan-binding positions include 115 to 117, 125 to 127, 191 to 192, G196, and R256; these read HTN, DKE, and DW. An intrachain disulfide couples C251 to C265.

This sequence belongs to the glycosyl hydrolase 16 family. XTH group 2 subfamily. Post-translationally, contains at least one intrachain disulfide bond essential for its enzymatic activity. In terms of processing, N-glycosylated; essential for its enzymatic activity. Highly expressed. Predominantly expressed in stems. Expressed in shoot apical meristems, also found in seedlings and meristems.

It is found in the secreted. Its subcellular location is the cell wall. The protein localises to the extracellular space. The protein resides in the apoplast. It carries out the reaction breaks a beta-(1-&gt;4) bond in the backbone of a xyloglucan and transfers the xyloglucanyl segment on to O-4 of the non-reducing terminal glucose residue of an acceptor, which can be a xyloglucan or an oligosaccharide of xyloglucan.. Its function is as follows. Catalyzes xyloglucan endohydrolysis (XEH) and/or endotransglycosylation (XET). Cleaves and religates xyloglucan polymers, an essential constituent of the primary cell wall, and thereby participates in cell wall construction of growing tissues. May be required during development to modify the walls of cells under mechanical stress. The polypeptide is Xyloglucan endotransglucosylase/hydrolase protein 24 (XTH24) (Arabidopsis thaliana (Mouse-ear cress)).